Reading from the N-terminus, the 158-residue chain is Transcription elongation factor GreA (158 aa).

A coiled-coil region spans residues Glu48–Glu74.

The protein belongs to the GreA/GreB family.

Functionally, necessary for efficient RNA polymerase transcription elongation past template-encoded arresting sites. The arresting sites in DNA have the property of trapping a certain fraction of elongating RNA polymerases that pass through, resulting in locked ternary complexes. Cleavage of the nascent transcript by cleavage factors such as GreA or GreB allows the resumption of elongation from the new 3'terminus. GreA releases sequences of 2 to 3 nucleotides. This is Transcription elongation factor GreA from Syntrophotalea carbinolica (strain DSM 2380 / NBRC 103641 / GraBd1) (Pelobacter carbinolicus).